The sequence spans 512 residues: Histidine ammonia-lyase (512 aa).

The 5-imidazolinone (Ala-Gly) cross-link spans 142–144 (ASG). Ser143 carries the post-translational modification 2,3-didehydroalanine (Ser).

Belongs to the PAL/histidase family. Post-translationally, contains an active site 4-methylidene-imidazol-5-one (MIO), which is formed autocatalytically by cyclization and dehydration of residues Ala-Ser-Gly.

The protein resides in the cytoplasm. The enzyme catalyses L-histidine = trans-urocanate + NH4(+). It participates in amino-acid degradation; L-histidine degradation into L-glutamate; N-formimidoyl-L-glutamate from L-histidine: step 1/3. The chain is Histidine ammonia-lyase from Bartonella henselae (strain ATCC 49882 / DSM 28221 / CCUG 30454 / Houston 1) (Rochalimaea henselae).